Consider the following 187-residue polypeptide: GTP cyclohydrolase 1 (187 aa).

Zn(2+) is bound by residues C76, H79, and C148.

It belongs to the GTP cyclohydrolase I family. As to quaternary structure, toroid-shaped homodecamer, composed of two pentamers of five dimers.

It catalyses the reaction GTP + H2O = 7,8-dihydroneopterin 3'-triphosphate + formate + H(+). The protein operates within cofactor biosynthesis; 7,8-dihydroneopterin triphosphate biosynthesis; 7,8-dihydroneopterin triphosphate from GTP: step 1/1. The sequence is that of GTP cyclohydrolase 1 from Streptococcus agalactiae serotype V (strain ATCC BAA-611 / 2603 V/R).